The primary structure comprises 591 residues: MMRSHYCGQLNESLEGQEITLCGWVHRRRDHGGVIFLDIRDREGMAQVVFDPDRADSFAAADRVRSEYVVKVVGKVRARPAGAVNANMASGAIEVLGYELEVLNESETPPFPLNEYSDVGEETRLRYRFIDLRRPEMAEKLRLRSRITTSIRRYLDDSGFLDVETPILTRATPEGARDYLVPSRTHPGSFFALPQSPQLFKQLLMVAGFDRYYQIAKCFRDEDLRADRQPEFTQIDIETSFLNEEDIIGLTEKMVRQLFKEVLDLEFGDFPHMTFEEAMRRYGSDKPDLRNPLELVDVADQLTGVEFKVFSGPANDPKGRVAALRVPGAASMARSQIDDYTKFVSIYGAKGLAYIKVNERAKGPEGLQSPIVKFIPEDNLNVILDRVGAVDGDIVFFGADKFKIVSEALGALRIKIGNDLKLHTCEWAPMWVVDFPMFEENDDGSFTALHHPFTAPKCTPEELEANPATALSRAYDMVLNGTELGGGSIRIHRKEMQQAVFRLLGIAEDEQQEKFGFLLDALKYGAPPHGGLAFGLDRLVMLMAGAQSIREVIAFPKTQSAADVMTQAPGVVDAKALRELHIRLREQPKAE.

Residue Glu174 participates in L-aspartate binding. Residues 198–201 (QLFK) form an aspartate region. An L-aspartate-binding site is contributed by Arg220. Residues 220 to 222 (RDE) and Gln229 contribute to the ATP site. His450 contributes to the L-aspartate binding site. Glu483 provides a ligand contact to ATP. Residue Arg490 participates in L-aspartate binding. 535 to 538 (GLDR) lines the ATP pocket.

The protein belongs to the class-II aminoacyl-tRNA synthetase family. Type 1 subfamily. Homodimer.

The protein resides in the cytoplasm. The catalysed reaction is tRNA(Asx) + L-aspartate + ATP = L-aspartyl-tRNA(Asx) + AMP + diphosphate. Its function is as follows. Aspartyl-tRNA synthetase with relaxed tRNA specificity since it is able to aspartylate not only its cognate tRNA(Asp) but also tRNA(Asn). Reaction proceeds in two steps: L-aspartate is first activated by ATP to form Asp-AMP and then transferred to the acceptor end of tRNA(Asp/Asn). The chain is Aspartate--tRNA(Asp/Asn) ligase from Pseudomonas savastanoi pv. phaseolicola (strain 1448A / Race 6) (Pseudomonas syringae pv. phaseolicola (strain 1448A / Race 6)).